The chain runs to 509 residues: MVAQPSPIVGRLKLPESMPSLVSLEELTATKVLVTFLTIVIIAPRVFTVIKNAFSPISSIPGPLLNKLSPWPLTIATIKGTSHHFARSLHEKYGPIVVLAPGMVAVADTKEIKRIIQTEDWTKSEAIYGNFRQDPQRPTLLAYTDKKAYAKRKRMLSSMFGIKYIRSMEPIMMTCVEAAVRQLNKFCDEGTQGVAVVDMQHLIHSLAIDIIGITTFGGSLNVVDNGSHPLPSRLKAGLRIAGLMQLIPWIRFIPFLPTRDPYVDRFTYDIVDGRRQELESSQHSDLLQKLVEASDDSPGSDFRTSDVQDESVVMLTAGSETTANAELFTLMMLLKNPKVMKKLVDEVDQWYPPSEPDRQTDCGYSQAGMVYLQACIDETMRLVPGQATGSPRETSKDDVVLGYRIPAGTTVFPNTQEGHTQDAHWEEPQKFVPERWLEAQATNVPYWPFSAGSRVCIGKHFAFQEMHLTLVTLLRKFKFEYVDGQDESTVFRVAQQLKAESYRMKVSRR.

A helical membrane pass occupies residues 30 to 50 (TKVLVTFLTIVIIAPRVFTVI). C456 provides a ligand contact to heme.

It belongs to the cytochrome P450 family. The cofactor is heme.

It is found in the membrane. It functions in the pathway mycotoxin biosynthesis. In terms of biological role, cytochrome P450 monooxygenase; part of the gene cluster that mediates the biosynthesis of the mycotoxin lucilactaene and the lucilactaene-related compound NG-391 that act as cell cycle inhibitors with potent growth inhibitory activity against malarial parasites, moderate growth inhibitory activity against cancer cells, and no activity against bacteria and fungi. Within the pathway, LUC2 performs C-20 methyl group hydroxylation of several intermediates. LUC2 does not perform the full oxidation of the C-20 methyl group into carboxylic acid, which is a prerequisite for the final methylation step. The pathway begins with the hybrid PKS-NRPS synthetase LUC5 which is responsible for the condensation of one acetyl-coenzyme A (CoA) unit with six malonyl-CoA units and the amide linkage of the arising heptaketide and homoserine, subsequently releasing the first intermediate prelucilactaene B. Both the cytochrome P450 monooxygenase LUC2 and the hydrolase LUC6 function in parallel in modification of prelucilactaene B. LUC6 may catalyze the 2-pyrrolidone ring formation to form prelucilactaene C from prelucilactaene B, followed by C-15 hydroxylation by the same enzyme to give prelucilactaene D, which is then converted to prelucilactaene E by epoxidation, and finally to prelucilactaene F by cyclization. Prelucilactane D, prelucilactaene E, and prelucilactaene F can be converted to dihydrolucilactaene, NG391, and lucilactaene, respectively, via C-20 methyl group hydroxylation by the cytochrome P450 monooxygenase LUC2. However, LUC2, unlike FUS8 in fusarin C biosynthesis, is not enough for the full oxidation of the C-20 methyl group into carboxylic acid, which is a prerequisite for the final methylation step. The aldehyde dehydrogenase LUC3 is involved in the biosynthesis by further oxidation of the C-20 alcoholic analog prelucilactaene G into a carboxylic derivative. This unidentified carboxylic derivative may be converted to demethyllucilactaene. As the last step, the methyltransferase LUC1 methylates the hydroxyl group at C-21 of demethyllucilactaene to generate lucilactaene. The chain is Cytochrome P450 monooxygenase LUC2 from Fusarium sp.